The chain runs to 455 residues: Argininosuccinate lyase (455 aa).

The protein belongs to the lyase 1 family. Argininosuccinate lyase subfamily.

The protein localises to the cytoplasm. The enzyme catalyses 2-(N(omega)-L-arginino)succinate = fumarate + L-arginine. Its pathway is amino-acid biosynthesis; L-arginine biosynthesis; L-arginine from L-ornithine and carbamoyl phosphate: step 3/3. This chain is Argininosuccinate lyase, found in Shewanella denitrificans (strain OS217 / ATCC BAA-1090 / DSM 15013).